A 299-amino-acid polypeptide reads, in one-letter code: Acetylglutamate kinase (299 aa).

Residues 72-73 (GG), R94, and N196 each bind substrate.

The protein belongs to the acetylglutamate kinase family. ArgB subfamily.

The protein localises to the cytoplasm. It carries out the reaction N-acetyl-L-glutamate + ATP = N-acetyl-L-glutamyl 5-phosphate + ADP. Its pathway is amino-acid biosynthesis; L-arginine biosynthesis; N(2)-acetyl-L-ornithine from L-glutamate: step 2/4. Functionally, catalyzes the ATP-dependent phosphorylation of N-acetyl-L-glutamate. The polypeptide is Acetylglutamate kinase (Paraburkholderia phymatum (strain DSM 17167 / CIP 108236 / LMG 21445 / STM815) (Burkholderia phymatum)).